Reading from the N-terminus, the 437-residue chain is Enolase (437 aa).

Gln162 is a binding site for (2R)-2-phosphoglycerate. Glu204 acts as the Proton donor in catalysis. Residues Asp251, Glu297, and Asp324 each contribute to the Mg(2+) site. 4 residues coordinate (2R)-2-phosphoglycerate: Lys349, Arg378, Ser379, and Lys400. Residue Lys349 is the Proton acceptor of the active site.

It belongs to the enolase family. The cofactor is Mg(2+).

Its subcellular location is the cytoplasm. The protein resides in the secreted. It localises to the cell surface. The enzyme catalyses (2R)-2-phosphoglycerate = phosphoenolpyruvate + H2O. Its pathway is carbohydrate degradation; glycolysis; pyruvate from D-glyceraldehyde 3-phosphate: step 4/5. Its function is as follows. Catalyzes the reversible conversion of 2-phosphoglycerate (2-PG) into phosphoenolpyruvate (PEP). It is essential for the degradation of carbohydrates via glycolysis. The chain is Enolase from Chlorobium phaeobacteroides (strain DSM 266 / SMG 266 / 2430).